Consider the following 229-residue polypeptide: uncharacterized protein (229 aa).

Residues 24-78 form the HTH cro/C1-type domain; it reads LRKWRSIFNASQSDLARKLGISPSVISDYESGRRKPGTAFLKKFVCALIELDGER. Residues 35 to 54 constitute a DNA-binding region (H-T-H motif); sequence QSDLARKLGISPSVISDYES.

This is an uncharacterized protein from Archaeoglobus fulgidus (strain ATCC 49558 / DSM 4304 / JCM 9628 / NBRC 100126 / VC-16).